The following is a 333-amino-acid chain: Methionyl-tRNA formyltransferase (333 aa).

Residue 106-109 (SLLP) coordinates (6S)-5,6,7,8-tetrahydrofolate.

The protein belongs to the Fmt family.

The catalysed reaction is L-methionyl-tRNA(fMet) + (6R)-10-formyltetrahydrofolate = N-formyl-L-methionyl-tRNA(fMet) + (6S)-5,6,7,8-tetrahydrofolate + H(+). Attaches a formyl group to the free amino group of methionyl-tRNA(fMet). The formyl group appears to play a dual role in the initiator identity of N-formylmethionyl-tRNA by promoting its recognition by IF2 and preventing the misappropriation of this tRNA by the elongation apparatus. This Elusimicrobium minutum (strain Pei191) protein is Methionyl-tRNA formyltransferase.